The chain runs to 238 residues: tRNA (guanine-N(7)-)-methyltransferase (238 aa).

The segment covering 1 to 12 (MTDTAENQTPND) has biased composition (polar residues). Residues 1–20 (MTDTAENQTPNDRQAGHPRS) are disordered. S-adenosyl-L-methionine-binding residues include Glu-70, Asp-95, Asp-122, and Asp-145. Residue Asp-145 is part of the active site. Substrate contacts are provided by residues Lys-149, Asp-181, and 216–219 (TKFE).

Belongs to the class I-like SAM-binding methyltransferase superfamily. TrmB family.

It catalyses the reaction guanosine(46) in tRNA + S-adenosyl-L-methionine = N(7)-methylguanosine(46) in tRNA + S-adenosyl-L-homocysteine. Its pathway is tRNA modification; N(7)-methylguanine-tRNA biosynthesis. Catalyzes the formation of N(7)-methylguanine at position 46 (m7G46) in tRNA. In Neisseria meningitidis serogroup C (strain 053442), this protein is tRNA (guanine-N(7)-)-methyltransferase.